An 820-amino-acid polypeptide reads, in one-letter code: Leucine--tRNA ligase (820 aa).

The short motif at 40-51 (PYPSGAGLHVGH) is the 'HIGH' region element. Residues 601–605 (KMSKS) carry the 'KMSKS' region motif. An ATP-binding site is contributed by lysine 604.

Belongs to the class-I aminoacyl-tRNA synthetase family.

It localises to the cytoplasm. It catalyses the reaction tRNA(Leu) + L-leucine + ATP = L-leucyl-tRNA(Leu) + AMP + diphosphate. The protein is Leucine--tRNA ligase of Chlamydia abortus (strain DSM 27085 / S26/3) (Chlamydophila abortus).